Consider the following 152-residue polypeptide: Transcriptional regulator MraZ (152 aa).

SpoVT-AbrB domains lie at 5-52 and 81-124; these read AQAI…PLKE and ATEC…SETE.

This sequence belongs to the MraZ family. As to quaternary structure, forms oligomers.

It localises to the cytoplasm. It is found in the nucleoid. In Mannheimia succiniciproducens (strain KCTC 0769BP / MBEL55E), this protein is Transcriptional regulator MraZ.